The primary structure comprises 84 residues: Large ribosomal subunit protein bL27 (84 aa).

Residues 1-20 (MAHKKGGGSTKNGRDSNPKY) form a disordered region.

It belongs to the bacterial ribosomal protein bL27 family.

The sequence is that of Large ribosomal subunit protein bL27 (rpmA) from Prosthecochloris vibrioformis (Chlorobium vibrioforme).